Reading from the N-terminus, the 211-residue chain is Claudin-7 (211 aa).

Residues 1-7 (MANSGLQ) are Cytoplasmic-facing. The chain crosses the membrane as a helical span at residues 8 to 28 (LLGFSMALLGWVGLVACTAIP). Residues 29 to 81 (QWQMSSYAGDNIITAQAMYKGLWMDCVTQSTGMMSCKMYDSVLALSAALQATR) are Extracellular-facing. A helical membrane pass occupies residues 82 to 102 (ALMVVSLVLGFLAMFVATMGM). Over 103–117 (KCTRCGGDDKVKKAR) the chain is Cytoplasmic. A helical membrane pass occupies residues 118–138 (IAMGGGIIFIVAGLAALVACS). The Extracellular portion of the chain corresponds to 139 to 160 (WYGHQIVTDFYNPLIPTNIKYE). Residues 161 to 181 (FGPAIFIGWAGSALVILGGAL) traverse the membrane as a helical segment. Topologically, residues 182–211 (LSCSCPGNESKAGYRVPRSYPKSNSSKEYV) are cytoplasmic. Positions 210 to 211 (YV) are interactions with TJP1, TJP2 and TJP3.

This sequence belongs to the claudin family. Directly interacts with TJP1/ZO-1, TJP2/ZO-2 and TJP3/ZO-3. The phosphorylated form interacts with EPCAM. Does not interact with CD81. Post-translationally, phosphorylated. Expressed in kidney, lung and prostate. Isoform 1 seems to be predominant, except in some normal prostate samples, where isoform 2 is the major form. Down-regulated in breast cancers, including ductal carcinoma in situ (DCIS), lobular carcinoma in situ (LCIS) and invasive ductal carcinoma (IDC) (at protein level), as well as in several cancer cell lines. Loss of expression correlates with histological grade, occurring predominantly in high-grade lesions.

Its subcellular location is the cell membrane. It is found in the basolateral cell membrane. It localises to the cell junction. The protein resides in the tight junction. Functionally, plays a major role in tight junction-specific obliteration of the intercellular space. This Homo sapiens (Human) protein is Claudin-7 (CLDN7).